Here is a 209-residue protein sequence, read N- to C-terminus: Uracil phosphoribosyltransferase (209 aa).

5-phospho-alpha-D-ribose 1-diphosphate contacts are provided by residues R79, R104, and 131 to 139 (DPMLATGGS). Residues I194 and 199–201 (GDA) each bind uracil. D200 provides a ligand contact to 5-phospho-alpha-D-ribose 1-diphosphate.

This sequence belongs to the UPRTase family. It depends on Mg(2+) as a cofactor.

The enzyme catalyses UMP + diphosphate = 5-phospho-alpha-D-ribose 1-diphosphate + uracil. It participates in pyrimidine metabolism; UMP biosynthesis via salvage pathway; UMP from uracil: step 1/1. Its activity is regulated as follows. Allosterically activated by GTP. In terms of biological role, catalyzes the conversion of uracil and 5-phospho-alpha-D-ribose 1-diphosphate (PRPP) to UMP and diphosphate. This Streptococcus salivarius protein is Uracil phosphoribosyltransferase.